The following is a 472-amino-acid chain: Nucleoporin NUP49/NSP49 (472 aa).

An FG 1 repeat occupies 2–3; that stretch reads FG. One copy of the GLFG 1 repeat lies at 14–17; the sequence is GLFG. The tract at residues 28–104 is disordered; that stretch reads NTGFSFGGTQ…TANTGGGLFG (77 aa). Residues 33 to 34 form an FG 2 repeat; that stretch reads FG. One copy of the GLFG 2 repeat lies at 48 to 51; it reads GLFG. Over residues 64 to 80 the composition is skewed to low complexity; that stretch reads SFGQQQQQSQTNAFGGS. FG repeat units follow at residues 65 to 66 and 77 to 78; these read FG. GLFG repeat units follow at residues 86 to 89 and 101 to 104; these read GLFG. An SLFG 1 repeat occupies 113-116; sequence SLFG. 2 GLFG repeats span residues 125 to 128 and 148 to 151; these read GLFG. The stretch at 159-162 is one SLFG 2 repeat; the sequence is SLFG. One copy of the GLFG 7; approximate repeat lies at 175–178; that stretch reads GMFG. One copy of the SLFG 3 repeat lies at 185 to 188; it reads SLFG. One copy of the GLFG 8 repeat lies at 199 to 202; it reads GLFG. The SLFG 4 repeat unit spans residues 210 to 213; that stretch reads SLFG. The interval 211-242 is disordered; that stretch reads LFGSSNNNNNNNNSNNIMSASGGLFGNQQQQL. The segment covering 214 to 226 has biased composition (low complexity); it reads SSNNNNNNNNSNN. One copy of the GLFG 9 repeat lies at 233-236; sequence GLFG.

It belongs to the nucleoporin GLFG family. As to quaternary structure, component of the nuclear pore complex (NPC). NPC constitutes the exclusive means of nucleocytoplasmic transport. NPCs allow the passive diffusion of ions and small molecules and the active, nuclear transport receptor-mediated bidirectional transport of macromolecules such as proteins, RNAs, ribonucleoparticles (RNPs), and ribosomal subunits across the nuclear envelope. Due to its 8-fold rotational symmetry, all subunits are present with 8 copies or multiples thereof. NUP49 is part of the NUP57 subcomplex (NIC96, NSP1, NUP49, NUP57) interacting with NUP57. Interacts through its FG repeats with karyopherins.

It localises to the nucleus. The protein resides in the nuclear pore complex. The protein localises to the nucleus membrane. Its function is as follows. Functions as a component of the nuclear pore complex (NPC). NPC components, collectively referred to as nucleoporins (NUPs), can play the role of both NPC structural components and of docking or interaction partners for transiently associated nuclear transport factors. Active directional transport is assured by both, a Phe-Gly (FG) repeat affinity gradient for these transport factors across the NPC and a transport cofactor concentration gradient across the nuclear envelope (GSP1 and GSP2 GTPases associated predominantly with GTP in the nucleus, with GDP in the cytoplasm). NUP49 plays an important role in several nuclear transport pathways including poly(A)+ RNA, tRNA, and pre-ribosome transport. The protein is Nucleoporin NUP49/NSP49 (NUP49) of Saccharomyces cerevisiae (strain ATCC 204508 / S288c) (Baker's yeast).